We begin with the raw amino-acid sequence, 571 residues long: Putative phospholipase B-like 1 (571 aa).

A signal peptide spans 1–18 (MNWIFIFLAAAVAIGCEA). Residues asparagine 62, asparagine 149, asparagine 442, and asparagine 473 are each glycosylated (N-linked (GlcNAc...) asparagine).

This sequence belongs to the phospholipase B-like family.

The protein localises to the lysosome. In terms of biological role, putative phospholipase. The protein is Putative phospholipase B-like 1 of Caenorhabditis elegans.